We begin with the raw amino-acid sequence, 345 residues long: Beta-hexosaminidase (345 aa).

Substrate contacts are provided by residues Asp60, Arg68, Arg132, and 162-163 (KH). The active-site Proton donor/acceptor is His175. Asp247 acts as the Nucleophile in catalysis.

The protein belongs to the glycosyl hydrolase 3 family. NagZ subfamily.

The protein resides in the cytoplasm. It carries out the reaction Hydrolysis of terminal non-reducing N-acetyl-D-hexosamine residues in N-acetyl-beta-D-hexosaminides.. It participates in cell wall biogenesis; peptidoglycan recycling. Its function is as follows. Plays a role in peptidoglycan recycling by cleaving the terminal beta-1,4-linked N-acetylglucosamine (GlcNAc) from peptide-linked peptidoglycan fragments, giving rise to free GlcNAc, anhydro-N-acetylmuramic acid and anhydro-N-acetylmuramic acid-linked peptides. The chain is Beta-hexosaminidase from Actinobacillus pleuropneumoniae serotype 3 (strain JL03).